Here is a 154-residue protein sequence, read N- to C-terminus: Putative protein heh-1 (154 aa).

Residues 1 to 15 (MKTVIFLALLGLAAA) form the signal peptide. Disulfide bonds link Cys-39–Cys-50 and Cys-97–Cys-103.

The protein belongs to the NPC2 family.

It localises to the secreted. The protein is Putative protein heh-1 (heh-1) of Caenorhabditis elegans.